Consider the following 352-residue polypeptide: Elongation factor Tu, mitochondrial (352 aa).

Residues 45–241 (RPHVNVGTIG…AIDTHIPLPH (197 aa)) form the tr-type G domain. Residues 54 to 61 (GHVDHGKT) form a G1 region. GTP is bound by residues aspartate 57, glycine 59, lysine 60, threonine 61, and threonine 62. Threonine 61 is a binding site for Mg(2+). A G2 region spans residues 95 to 99 (GITIN). The tract at residues 116–119 (DCPG) is G3. 5 residues coordinate GTP: asparagine 171, aspartate 174, serine 209, alanine 210, and leucine 211. Positions 171-174 (NKAD) are G4. The tract at residues 209-211 (SAL) is G5.

It is found in the mitochondrion. It carries out the reaction GTP + H2O = GDP + phosphate + H(+). Its function is as follows. GTP hydrolase that promotes the GTP-dependent binding of aminoacyl-tRNA to the A-site of ribosomes during protein biosynthesis. The sequence is that of Elongation factor Tu, mitochondrial from Gallus gallus (Chicken).